The primary structure comprises 229 residues: Lipoprotein-releasing system ATP-binding protein LolD (229 aa).

One can recognise an ABC transporter domain in the interval 6-226 (LELKSVDRHY…TLSDGRVVEL (221 aa)). Position 42–49 (42–49 (APSGTGKS)) interacts with ATP.

Belongs to the ABC transporter superfamily. Lipoprotein translocase (TC 3.A.1.125) family. In terms of assembly, the complex is composed of two ATP-binding proteins (LolD) and two transmembrane proteins (LolC and LolE).

Its subcellular location is the cell inner membrane. Part of the ABC transporter complex LolCDE involved in the translocation of mature outer membrane-directed lipoproteins, from the inner membrane to the periplasmic chaperone, LolA. Responsible for the formation of the LolA-lipoprotein complex in an ATP-dependent manner. The chain is Lipoprotein-releasing system ATP-binding protein LolD from Chelativorans sp. (strain BNC1).